We begin with the raw amino-acid sequence, 775 residues long: Polyribonucleotide nucleotidyltransferase (775 aa).

Mg(2+) is bound by residues Asp-487 and Asp-493. The KH domain maps to 554–613 (PKVEVVDVPEEKAPLIIGPGGSTVKKIYDETGVKVWVGEQGKVYLFVFPGGDVEKAKQMI). S1 motif domains follow at residues 623–693 (GAVY…IGIE) and 707–775 (GDVY…TDDV).

The protein belongs to the polyribonucleotide nucleotidyltransferase family. Mg(2+) is required as a cofactor.

The protein resides in the cytoplasm. It catalyses the reaction RNA(n+1) + phosphate = RNA(n) + a ribonucleoside 5'-diphosphate. Functionally, involved in mRNA degradation. Catalyzes the phosphorolysis of single-stranded polyribonucleotides processively in the 3'- to 5'-direction. This is Polyribonucleotide nucleotidyltransferase from Aquifex aeolicus (strain VF5).